The sequence spans 349 residues: Draxin (349 aa).

A signal peptide spans 1-25 (MAASSTFFSPSLFLCVLVLIDITLA). Polar residues predominate over residues 40–53 (NHLQNQETWPQQPR). Disordered regions lie at residues 40-63 (NHLQNQETWPQQPRSGHHHKHGLA), 119-166 (PHAE…LYKK), and 246-273 (WPSAKKKEKRRSKSSNGGNETSSAEGEP). Positions 54-63 (SGHHHKHGLA) are enriched in basic residues. Basic and acidic residues predominate over residues 119 to 139 (PHAERENQSPGSERGKKQNRE). Basic residues-rich tracts occupy residues 140-155 (QRRHSRRDRLKHHRGK) and 249-258 (AKKKEKRRSK). N-linked (GlcNAc...) asparagine glycosylation occurs at Asn-264.

This sequence belongs to the draxin family.

Its subcellular location is the secreted. Chemorepulsive axon guidance protein required for the development of spinal cord and forebrain commissures. Acts as a chemorepulsive guidance protein for commissural axons during development. Able to inhibit or repel neurite outgrowth from dorsal spinal cord and cortical explants in vitro. Binds directly to the neurites and growth cones. The chain is Draxin from Gallus gallus (Chicken).